The primary structure comprises 235 residues: Carboxymethylenebutenolidase 2 (235 aa).

Residues Cys-117, Asp-173, and His-204 contribute to the active site.

It belongs to the dienelactone hydrolase family. As to quaternary structure, monomer.

It catalyses the reaction 2-(5-oxo-2,5-dihydrofuran-2-ylidene)acetate + H2O = 4-oxohex-2-enedioate + H(+). The protein operates within aromatic compound metabolism; 3-chlorocatechol degradation. Ring cleavage of cyclic ester dienelactone to produce maleylacetate. This Cupriavidus pinatubonensis (strain JMP 134 / LMG 1197) (Cupriavidus necator (strain JMP 134)) protein is Carboxymethylenebutenolidase 2 (tfdEII).